The following is a 214-amino-acid chain: Transcription factor 23 (214 aa).

2 disordered regions span residues 1–86 and 174–214; these read MSQR…ARER and DSTT…LGDK. Over residues 40-49 the composition is skewed to basic and acidic residues; it reads TRQDPWEERS. A bHLH domain is found at 76–128; sequence EASPENAARERSRVRTLRQAFLALQAALPAVPPDTKLSKLDVLVLAASYIAHL. A compositionally biased stretch (polar residues) spans 174–183; the sequence is DSTTASTPSQ.

In terms of assembly, forms inactive heterodimeric complexes with TCF3. In terms of tissue distribution, expressed in liver, kidney and spleen.

It localises to the nucleus. Its function is as follows. Inhibits E-box-mediated binding and transactivation of bHLH factors. Inhibitory effect is similar to that of ID proteins. Inhibits the formation of TCF3 and MYOD1 homodimers and heterodimers. Lacks DNA binding activity. Seems to play a role in the inhibition of myogenesis. The chain is Transcription factor 23 (TCF23) from Homo sapiens (Human).